The sequence spans 145 residues: D-aminoacyl-tRNA deacylase (145 aa).

The Gly-cisPro motif, important for rejection of L-amino acids motif lies at 137 to 138; it reads GP.

Belongs to the DTD family. As to quaternary structure, homodimer.

The protein resides in the cytoplasm. The enzyme catalyses glycyl-tRNA(Ala) + H2O = tRNA(Ala) + glycine + H(+). The catalysed reaction is a D-aminoacyl-tRNA + H2O = a tRNA + a D-alpha-amino acid + H(+). Its function is as follows. An aminoacyl-tRNA editing enzyme that deacylates mischarged D-aminoacyl-tRNAs. Also deacylates mischarged glycyl-tRNA(Ala), protecting cells against glycine mischarging by AlaRS. Acts via tRNA-based rather than protein-based catalysis; rejects L-amino acids rather than detecting D-amino acids in the active site. By recycling D-aminoacyl-tRNA to D-amino acids and free tRNA molecules, this enzyme counteracts the toxicity associated with the formation of D-aminoacyl-tRNA entities in vivo and helps enforce protein L-homochirality. This Pseudomonas aeruginosa (strain UCBPP-PA14) protein is D-aminoacyl-tRNA deacylase.